The sequence spans 242 residues: Small ribosomal subunit protein uS2 (242 aa).

Belongs to the universal ribosomal protein uS2 family.

The sequence is that of Small ribosomal subunit protein uS2 from Shouchella clausii (strain KSM-K16) (Alkalihalobacillus clausii).